Consider the following 606-residue polypeptide: MAPNNGSWLVLSISMMLLSHGMIIIAKDQAIHHHDDDHDDMLINDHQMINDDDPYRTAYHFQSPKNWMNDPNGPMIYKGIYHLFYQYYPYDPVWHTEIVWGHSTSTDLINWTQQPIALSPSEPYDINGCWSGSITILPQNKPVILYTGINNKNYQVQNLALPKNLSDPYLKEWIKLPQNPLMAGTPTNNNNINASSFRDPSTAWQLSDGKWRVIVGTQQGKRGLAVLFTSDDFVKWNNTGNPLHSTEGNGIWECPDFFPVYVGKSLGADTSIIGDDVKHVLKLSLFDTQYEYYTIGRYDIEKDIYVPDEGSIESDLGLRYDYGKFYASKSFFDDETNRRILWGWVNESSIQADDIKKGWSGVQAIPRTVVLDKSGKQLVQWPLAEVDMLRENDVELPSQVIKGGSLVEISQITASQADVEISFKIPESNYVEELDSTCTNPQILCSQKGASIKGRFGPFGLLTLASMGLEEYTAVFFRIFKGPNKYVVLMCSDQTRSSLNPTTDKLSFGIFVDVDPINEDLSLRILIDHSIVESFSAKGKSCITARVYPTMAINDKAKLYVFNNGTEDVKITKLSAWSMKKAQINLSTDNTSNMSYNSNKVEKEEF.

Residues 1-21 (MAPNNGSWLVLSISMMLLSHG) form the signal peptide. An N-linked (GlcNAc...) asparagine glycan is attached at asparagine 5. Residue aspartate 70 is part of the active site. N-linked (GlcNAc...) asparagine glycosylation is found at asparagine 110, asparagine 164, asparagine 193, asparagine 237, and asparagine 346. Cysteine 445 and cysteine 491 form a disulfide bridge. N-linked (GlcNAc...) asparagine glycosylation is found at asparagine 564, asparagine 585, asparagine 590, and asparagine 593.

This sequence belongs to the glycosyl hydrolase 32 family.

The enzyme catalyses Hydrolysis of terminal, non-reducing (2-&gt;6)-linked beta-D-fructofuranose residues in fructans.. With respect to regulation, not inhibited by sucrose. Functionally, hydrolyzes levan-type beta-(2-&gt;6)-linked fructans to fructose, but not inulin-type beta-(2-&gt;1)-linked fructans. This is Fructan 6-exohydrolase from Beta vulgaris (Sugar beet).